Here is a 431-residue protein sequence, read N- to C-terminus: UDP-N-acetylmuramate--L-alanine ligase (431 aa).

Glycine 108–serine 114 is an ATP binding site.

This sequence belongs to the MurCDEF family.

Its subcellular location is the cytoplasm. The catalysed reaction is UDP-N-acetyl-alpha-D-muramate + L-alanine + ATP = UDP-N-acetyl-alpha-D-muramoyl-L-alanine + ADP + phosphate + H(+). It participates in cell wall biogenesis; peptidoglycan biosynthesis. Cell wall formation. The chain is UDP-N-acetylmuramate--L-alanine ligase from Exiguobacterium sibiricum (strain DSM 17290 / CCUG 55495 / CIP 109462 / JCM 13490 / 255-15).